We begin with the raw amino-acid sequence, 2399 residues long: Protein DOP1A (2399 aa).

Disordered stretches follow at residues 556–598 (PSGQ…SSES), 619–660 (NGQG…GAAG), 1105–1124 (SDSGCSQSSAGDNFSYEVDP), 1166–1188 (SVTSELEIESLQTKSSDLDPGKE), 1234–1263 (SPCISGTAQTLNDSSVPSETKSRQRSHSSI), and 1279–1308 (ETIVKESGKQPGAKPKVKLARKKDEDKKKA). Low complexity-rich tracts occupy residues 629-647 (GSTSSETETASTVGSEETV) and 1105-1116 (SDSGCSQSSAGD). Composition is skewed to polar residues over residues 1166 to 1180 (SVTSELEIESLQTKS) and 1234 to 1252 (SPCISGTAQTLNDSSVPSE). Ser1261 carries the phosphoserine modification.

The protein belongs to the DOP1 family.

It localises to the golgi apparatus membrane. Its function is as follows. May be involved in protein traffic between late Golgi and early endosomes. The chain is Protein DOP1A (Dop1a) from Mus musculus (Mouse).